We begin with the raw amino-acid sequence, 424 residues long: Spore coat protein SP60 (424 aa).

Residues 1–23 (MKILSLLVVGALCMGGKVYGEVN) form the signal peptide. Follistatin-like domains are found at residues 52 to 74 (DCST…RQCV), 85 to 109 (KCDN…ALCV), 117 to 139 (VCRT…ECCV), 184 to 206 (ICRL…ECCV), 215 to 234 (DLKC…SKCC), and 299 to 322 (RCDD…LSCE). The tract at residues 330–424 (RSLDWAENEN…FQDANDEWDY (95 aa)) is disordered. Acidic residues-rich tracts occupy residues 335 to 357 (AENE…YDGD) and 365 to 424 (YDGD…EWDY).

This is Spore coat protein SP60 (cotC) from Dictyostelium discoideum (Social amoeba).